A 1429-amino-acid polypeptide reads, in one-letter code: DNA-directed RNA polymerase subunit beta' (1429 aa).

The Zn(2+) site is built by C68, C70, C83, and C86. D459, D461, and D463 together coordinate Mg(2+). The Zn(2+) site is built by C805, C879, C886, and C889. The disordered stretch occupies residues 1407–1429 (ESFPLLGGDGEPASTTSSTTEGE). A compositionally biased stretch (polar residues) spans 1419 to 1429 (ASTTSSTTEGE).

This sequence belongs to the RNA polymerase beta' chain family. As to quaternary structure, the RNAP catalytic core consists of 2 alpha, 1 beta, 1 beta' and 1 omega subunit. When a sigma factor is associated with the core the holoenzyme is formed, which can initiate transcription. Requires Mg(2+) as cofactor. It depends on Zn(2+) as a cofactor.

It carries out the reaction RNA(n) + a ribonucleoside 5'-triphosphate = RNA(n+1) + diphosphate. Functionally, DNA-dependent RNA polymerase catalyzes the transcription of DNA into RNA using the four ribonucleoside triphosphates as substrates. This Rhodopirellula baltica (strain DSM 10527 / NCIMB 13988 / SH1) protein is DNA-directed RNA polymerase subunit beta'.